We begin with the raw amino-acid sequence, 29 residues long: Neurotoxin BmK A3-6 (29 aa).

In terms of processing, contains 3 disulfide bonds. In terms of tissue distribution, expressed by the venom gland.

The protein localises to the secreted. This is Neurotoxin BmK A3-6 from Olivierus martensii (Manchurian scorpion).